We begin with the raw amino-acid sequence, 1558 residues long: ABC transporter NFT1 (1558 aa).

At 1-29 (MIKNGTCPFWERDDLSECARREYIEFKFP) the chain is on the extracellular side. N-linked (GlcNAc...) asparagine glycosylation is present at Asn4. Residues 30 to 50 (LFILLTGMIYAFCKVFRAFYL) traverse the membrane as a helical segment. Topologically, residues 51 to 103 (RRKNHTNEAPEFEEQGNGNHEYARFSVLRLKSAWESRSFCNVNNRSTFDKFKK) are cytoplasmic. Residues 104–124 (FIEGAFIVLQLTIHLYILSNM) traverse the membrane as a helical segment. The Extracellular segment spans residues 125-130 (PMDNKK). Residues 131–151 (FFHQGFLVQMFLWILLLVVIT) traverse the membrane as a helical segment. Over 152-169 (LRLISASQSFRWVLACKR) the chain is Cytoplasmic. A helical membrane pass occupies residues 170 to 190 (DLWAVSFYSYASLFTLSILPL). At 191 to 201 (RSVFIGKIKDK) the chain is on the extracellular side. The chain crosses the membrane as a helical span at residues 202 to 222 (IMVKYIISETFIDLALLLLLS). At 223-302 (TSSIEGTRYS…SSKKGRLLPN (80 aa)) the chain is on the cytoplasmic side. The helical transmembrane segment at 303-323 (IICYFKAVFISQLFLAFVSSF) threads the bilayer. The region spanning 311–621 (FISQLFLAFV…IASTVSLLIQ (311 aa)) is the ABC transmembrane type-1 1 domain. Residues 324 to 351 (LNFVPSLLMPRILSYVNDPKSQSWNLVS) are Extracellular-facing. Residues 352-374 (LYVSSMLVSKIIATTCRGQGLFL) form a helical membrane-spanning segment. At 375 to 449 (GEKGTMQLRT…VMSIDAFKVS (75 aa)) the chain is on the cytoplasmic side. The interval 410–434 (NASTSFEENPDSSEAEPRKKSSRKD) is disordered. Basic and acidic residues predominate over residues 424–434 (AEPRKKSSRKD). A helical membrane pass occupies residues 450–470 (EAMNTFYLACEAVFMTVTALM). Residues 471 to 481 (ILYSLLGWSAF) are Extracellular-facing. The helical transmembrane segment at 482-504 (AGTFALLAMIPLNFWCATFYGNY) threads the bilayer. The Cytoplasmic segment spans residues 505-558 (QADQLILTDKRTSGISEALNSIRVIKLLAWENLFYQKIINVRDGEIRLLKKKAT). Residues 559–579 (IFFLNHLIWFFGPTLVSAITF) form a helical membrane-spanning segment. At 580–584 (SVFIK) the chain is on the extracellular side. Residues 585-605 (FQNQTLTPTIAFTALSLFAIL) form a helical membrane-spanning segment. Residues 606–953 (RTPMDQIAST…KFSAYKWLAD (348 aa)) lie on the Cytoplasmic side of the membrane. An ABC transporter 1 domain is found at 651-892 (FGFEDASMEW…NEFLRESINN (242 aa)). 686–693 (GPTGSGKS) lines the ATP pocket. A compositionally biased stretch (polar residues) spans 892-901 (NDSKNTTHNQ). Residues 892–926 (NDSKNTTHNQIDLKRSTTSKKTKNGDPEGENSQDE) are disordered. A helical transmembrane segment spans residues 954 to 974 (YFGGLGVVFVFTSSAILIHGI). The ABC transmembrane type-1 2 domain occupies 961-1251 (VFVFTSSAIL…IIKVFSSVEL (291 aa)). Topologically, residues 975–1013 (TLSQGFWLRYWLETGSSGSKSTWLYRIVEGHSNIYFILT) are extracellular. The helical transmembrane segment at 1014–1034 (YIVIGFVSSFLTSGKVWIAII) threads the bilayer. Topologically, residues 1035–1082 (SGTNVTKKIFAKLLSSILYAKLRFHNVTPTGRIMNRFSKDMDIIDQQL) are cytoplasmic. Residues 1083-1105 (IPNFEGLSYSVVVCLWIILLIGY) traverse the membrane as a helical segment. Topologically, residues 1106-1109 (VTPQ) are extracellular. The helical transmembrane segment at 1110–1132 (FLLFAIPLCALYYTVCTLYLRAS) threads the bilayer. Residues 1133 to 1199 (RELKRIDNIN…ATEWITYRVD (67 aa)) are Cytoplasmic-facing. A helical membrane pass occupies residues 1200 to 1220 (IIGTLVLFSSSVMIIMKASYL). At 1221–1222 (DA) the chain is on the extracellular side. Residues 1223 to 1243 (GLAGILLSNAFSFTETAQWII) form a helical membrane-spanning segment. Topologically, residues 1244 to 1558 (KVFSSVELLM…LAKVSFDNKR (315 aa)) are cytoplasmic. Positions 1285 to 1538 (VELKNLSLRY…RNTIFYRLCR (254 aa)) constitute an ABC transporter 2 domain. 1319–1326 (GRTGAGKS) lines the ATP pocket.

This sequence belongs to the ABC transporter superfamily. ABCC family. Conjugate transporter (TC 3.A.1.208) subfamily.

Its subcellular location is the membrane. The polypeptide is ABC transporter NFT1 (NFT1) (Saccharomyces cerevisiae (strain YJM789) (Baker's yeast)).